We begin with the raw amino-acid sequence, 993 residues long: ATP-dependent DNA helicase MPH1 (993 aa).

Residues I94–K261 enclose the Helicase ATP-binding domain. I107–T114 provides a ligand contact to ATP. The short motif at D209–H212 is the DEAH box element. The Helicase C-terminal domain maps to K507–I655. The disordered stretch occupies residues N530 to M551. A compositionally biased stretch (polar residues) spans R539–M551. Positions L751 to E810 are FKH1-binding region. Phosphothreonine is present on residues T776 and T785.

This sequence belongs to the DEAD box helicase family. DEAH subfamily. FANCM sub-subfamily. As to quaternary structure, interacts with the MHF histone-fold complex composed of MHF1 and MHF2 to form the FANCM-MHF complex. Interacts with FHK1. Post-translationally, phosphorylation at both Thr-776 and Thr-785 is required for the interaction with FKH1.

Its subcellular location is the nucleus. It carries out the reaction ATP + H2O = ADP + phosphate + H(+). Its function is as follows. ATP-dependent DNA helicase involved in DNA damage repair by homologous recombination and in genome maintenance. Capable of unwinding D-loops. Plays a role in limiting crossover recombinants during mitotic DNA double-strand break (DSB) repair. Prevents crossovers between ectopic sequences by removing substrates for MUS81-MMS4 or RAD1-RAD10 cleavage. Component of a FANCM-MHF complex which promotes gene conversion at blocked replication forks, probably by reversal of the stalled fork. Binds to flap-structured DNA but not to non-flap nicked DNA, and participates in Okazaki fragment processing by stimulating the endonuclease activities of FEN1 and DNA2. Involved in recombination donor preference during mating-type switching via interaction with FKH1. In Saccharomyces cerevisiae (strain ATCC 204508 / S288c) (Baker's yeast), this protein is ATP-dependent DNA helicase MPH1.